The following is a 390-amino-acid chain: Chorismate synthase (390 aa).

The NADP(+) site is built by Arg-39 and Arg-45. Residues 132–134 (RSS), 253–254 (NA), Gly-298, 313–317 (KPIPT), and Arg-339 contribute to the FMN site.

This sequence belongs to the chorismate synthase family. Homotetramer. It depends on FMNH2 as a cofactor.

The enzyme catalyses 5-O-(1-carboxyvinyl)-3-phosphoshikimate = chorismate + phosphate. Its pathway is metabolic intermediate biosynthesis; chorismate biosynthesis; chorismate from D-erythrose 4-phosphate and phosphoenolpyruvate: step 7/7. Catalyzes the anti-1,4-elimination of the C-3 phosphate and the C-6 proR hydrogen from 5-enolpyruvylshikimate-3-phosphate (EPSP) to yield chorismate, which is the branch point compound that serves as the starting substrate for the three terminal pathways of aromatic amino acid biosynthesis. This reaction introduces a second double bond into the aromatic ring system. This chain is Chorismate synthase, found in Shouchella clausii (strain KSM-K16) (Alkalihalobacillus clausii).